Consider the following 95-residue polypeptide: Citrate lyase acyl carrier protein (95 aa).

Serine 14 is modified (O-(phosphoribosyl dephospho-coenzyme A)serine).

The protein belongs to the CitD family. As to quaternary structure, oligomer with a subunit composition of (alpha,beta,gamma)6.

Its subcellular location is the cytoplasm. Functionally, covalent carrier of the coenzyme of citrate lyase. In Haemophilus ducreyi (strain 35000HP / ATCC 700724), this protein is Citrate lyase acyl carrier protein.